Reading from the N-terminus, the 80-residue chain is Sulfur carrier protein TusA (80 aa).

The active-site Cysteine persulfide intermediate is the Cys17.

Belongs to the sulfur carrier protein TusA family.

The protein localises to the cytoplasm. Functionally, sulfur carrier protein which probably makes part of a sulfur-relay system. In Pseudomonas entomophila (strain L48), this protein is Sulfur carrier protein TusA.